The following is a 681-amino-acid chain: Methionine--tRNA ligase (681 aa).

Residues 14 to 24 (PYANGSIHLGH) carry the 'HIGH' region motif. 4 residues coordinate Zn(2+): Cys-145, Cys-148, Cys-158, and Cys-161. Residues 331–335 (KMSKS) carry the 'KMSKS' region motif. Residue Lys-334 participates in ATP binding. Residues 579–681 (AFAAIDLRVA…SGAKPGQRIK (103 aa)) form the tRNA-binding domain.

It belongs to the class-I aminoacyl-tRNA synthetase family. MetG type 1 subfamily. In terms of assembly, homodimer. Zn(2+) serves as cofactor.

The protein localises to the cytoplasm. It catalyses the reaction tRNA(Met) + L-methionine + ATP = L-methionyl-tRNA(Met) + AMP + diphosphate. Functionally, is required not only for elongation of protein synthesis but also for the initiation of all mRNA translation through initiator tRNA(fMet) aminoacylation. The sequence is that of Methionine--tRNA ligase from Pseudomonas fluorescens (strain ATCC BAA-477 / NRRL B-23932 / Pf-5).